We begin with the raw amino-acid sequence, 462 residues long: Toxin CfTX-2 (462 aa).

The signal sequence occupies residues 1 to 17 (MILVSLLPLLFMTGIAS).

It belongs to the jellyfish toxin family. Type I subfamily. In terms of assembly, oligomer. Post-translationally, contains disulfide bonds. In terms of tissue distribution, nematocytes.

Its subcellular location is the secreted. The protein localises to the nematocyst. It localises to the target cell membrane. In terms of biological role, may cause profound effects on the cardiovascular system of anesthetized rats (at 25 ug/kg), since the fraction containing this toxin and CfTX-1 produces an initial increase in mean arterial pressure, followed by cardiovascular collapse in all animals within 1 minute of injection. To note, the same fraction does not induce significant change in heart rate. Has weak hemolytic activity. Is lethal to crayfish. Causes cutaneous inflammation in humans. May act as a pore-forming toxin, disrupting normal transmembrane ion concentration gradients in susceptible cells. The polypeptide is Toxin CfTX-2 (Chironex fleckeri (Australian box jellyfish)).